We begin with the raw amino-acid sequence, 149 residues long: L-alanine exporter AlaE (149 aa).

Transmembrane regions (helical) follow at residues 16–36 (FAMVVYCSVVNMLIEIFLSGM), 46–66 (LVAIPVNILIAWPYGVYRDLI), 83–105 (ADVLAYVTFQSPVYIIILLTVGA), and 115–135 (SSNIVVSMLMGAVYGYFLDYC).

The protein belongs to the AlaE exporter family.

It localises to the cell inner membrane. In terms of biological role, exports L-alanine. The sequence is that of L-alanine exporter AlaE from Salmonella typhimurium (strain LT2 / SGSC1412 / ATCC 700720).